Consider the following 97-residue polypeptide: Prophage lipoprotein Bor homolog (97 aa).

The signal sequence occupies residues 1–16; sequence MKKMLLATALALLITG. Cys17 carries N-palmitoyl cysteine lipidation. Cys17 is lipidated: S-diacylglycerol cysteine.

Belongs to the lambda phage bor family.

The protein resides in the cell membrane. The sequence is that of Prophage lipoprotein Bor homolog (borD) from Escherichia coli (strain K12).